The following is a 943-amino-acid chain: 2-oxoglutarate dehydrogenase E1 component (943 aa).

The protein belongs to the alpha-ketoglutarate dehydrogenase family. Homodimer. Part of the 2-oxoglutarate dehydrogenase (OGDH) complex composed of E1 (2-oxoglutarate dehydrogenase), E2 (dihydrolipoamide succinyltransferase) and E3 (dihydrolipoamide dehydrogenase); the complex contains multiple copies of the three enzymatic components (E1, E2 and E3). It depends on thiamine diphosphate as a cofactor.

It carries out the reaction N(6)-[(R)-lipoyl]-L-lysyl-[protein] + 2-oxoglutarate + H(+) = N(6)-[(R)-S(8)-succinyldihydrolipoyl]-L-lysyl-[protein] + CO2. Its function is as follows. E1 component of the 2-oxoglutarate dehydrogenase (OGDH) complex which catalyzes the decarboxylation of 2-oxoglutarate, the first step in the conversion of 2-oxoglutarate to succinyl-CoA and CO(2). This Azotobacter vinelandii protein is 2-oxoglutarate dehydrogenase E1 component (sucA).